The sequence spans 149 residues: Large ribosomal subunit protein uL24 (149 aa).

This sequence belongs to the universal ribosomal protein uL24 family. As to quaternary structure, part of the 50S ribosomal subunit.

In terms of biological role, one of two assembly initiator proteins, it binds directly to the 5'-end of the 23S rRNA, where it nucleates assembly of the 50S subunit. Functionally, located at the polypeptide exit tunnel on the outside of the subunit. The polypeptide is Large ribosomal subunit protein uL24 (Hyperthermus butylicus (strain DSM 5456 / JCM 9403 / PLM1-5)).